Reading from the N-terminus, the 1702-residue chain is Dicer-like protein 4 (1702 aa).

2 disordered regions span residues 1-52 (MRDE…SAAT) and 89-120 (SSSS…EKDP). Over residues 17-31 (GKRDREQKNCEEEKN) the composition is skewed to basic and acidic residues. Low complexity predominate over residues 89 to 105 (SSSSVSSFSSSSSSLFS). Residues 131–307 (LCKKATEENV…SENLSKSINS (177 aa)) enclose the Helicase ATP-binding domain. 144–151 (LGTGCGKT) provides a ligand contact to ATP. A DECH box motif is present at residues 251-254 (DECH). Positions 475–629 (QLIKILSVFR…RMNLEITYRS (155 aa)) constitute a Helicase C-terminal domain. The region spanning 656–748 (SISLLYKYCS…LPDSKDEIED (93 aa)) is the Dicer dsRNA-binding fold domain. The region spanning 932 to 1054 (LVEDIFPPSG…IPPELSHLKI (123 aa)) is the PAZ domain. 2 consecutive RNase III domains span residues 1083–1251 (ELKH…VDSG) and 1292–1436 (LETL…LDCG). Glu-1330, Asp-1422, and Glu-1425 together coordinate Mg(2+). 2 DRBM domains span residues 1462-1528 (SPIK…NLKA) and 1621-1697 (TAKS…CLKH).

The protein belongs to the helicase family. Dicer subfamily. As to quaternary structure, interacts with DRB4. The cofactor is Mg(2+). Mn(2+) serves as cofactor.

Its subcellular location is the nucleus. Ribonuclease (RNase) III involved in RNA-mediated post-transcriptional gene silencing (PTGS). Functions in the biogenesis of trans-acting small interfering RNAs (ta-siRNAs, derived from the TAS1, TAS2 or TAS3 endogenous transcripts) by cleaving small dsRNAs into 21-24 nucleotide ta-siRNAs. Functions with the dsRNA-binding protein DRB4 in ta-siRNAs processing. Acts in the RDR6/SGS3/DCL4/AGO7 ta-siRNA pathway involved in leaf developmental timing. Plays a role in transitive silencing of transgenes by processing secondary siRNAs. This pathway, which requires DCL2 and RDR6, amplifies silencing by using the target RNA as substrate to generate secondary siRNAs, providing an efficient mechanism for long-distance silencing. Required for the production of the 30-40 nucleotide bacterial-induced long siRNAs (lsiRNA). May participate with DCL3 in the production of 24 nucleotide repeat-associated siRNAs (ra-siRNAs) which derive from heterochromatin and DNA repeats such as transposons. Plays an important role in antiviral RNA silencing. Involved in the production of viral siRNAs derived from the cucumber mosaic virus (CMV), turnip crinkle virus (TCV) and tobacco rattle virus (TRV). Targeted by the viral silencing suppressor (VSR) protein 2b of the cucumber mosaic virus (CMV) that inactivates DCL4 function in RNA silencing. Does not seem to be involved in microRNAs (miRNAs) processing. This is Dicer-like protein 4 (DCL4) from Arabidopsis thaliana (Mouse-ear cress).